Reading from the N-terminus, the 191-residue chain is Elongation factor P (191 aa).

It belongs to the elongation factor P family.

It is found in the cytoplasm. It participates in protein biosynthesis; polypeptide chain elongation. Involved in peptide bond synthesis. Stimulates efficient translation and peptide-bond synthesis on native or reconstituted 70S ribosomes in vitro. Probably functions indirectly by altering the affinity of the ribosome for aminoacyl-tRNA, thus increasing their reactivity as acceptors for peptidyl transferase. This is Elongation factor P from Ralstonia pickettii (strain 12J).